The chain runs to 147 residues: Myosin-2 essential light chain (147 aa).

EF-hand domains lie at 7–42 (DQLAEFQEAFNLFDNRGDGKIQLSQVGECLRALGQN), 80–115 (DTADDFIEGLRHFDKDASGYISSAELRHLLTTLGEK), and 115–147 (KLTDEEVEQLLANMEDQQGNINYEEFVRMVMSG). Phosphoserine is present on S30. D93, D95, S97, Y99, and E104 together coordinate Ca(2+).

In terms of assembly, myosin is a hexamer of 2 heavy chains and 4 light chains.

The protein is Myosin-2 essential light chain (Mlc-c) of Drosophila melanogaster (Fruit fly).